Consider the following 257-residue polypeptide: NAD-capped RNA hydrolase NudC (257 aa).

Substrate contacts are provided by lysine 25 and arginine 69. Residues cysteine 98 and cysteine 101 each coordinate Zn(2+). Substrate is bound at residue glutamate 111. Zn(2+)-binding residues include cysteine 116 and cysteine 119. A substrate-binding site is contributed by tyrosine 124. A Nudix hydrolase domain is found at 125-248; it reads PQIAPCIIVA…TVARRLIEDT (124 aa). The a divalent metal cation site is built by alanine 158, glutamate 174, and glutamate 178. A Nudix box motif is present at residues 159-180; the sequence is GFVEVGETLEQAVAREVMEESG. Residue 192-199 participates in substrate binding; it reads QPWPFPQS. Glutamate 219 lines the a divalent metal cation pocket. Residue alanine 241 coordinates substrate.

The protein belongs to the Nudix hydrolase family. NudC subfamily. Homodimer. Mg(2+) serves as cofactor. Mn(2+) is required as a cofactor. The cofactor is Zn(2+).

It carries out the reaction a 5'-end NAD(+)-phospho-ribonucleoside in mRNA + H2O = a 5'-end phospho-adenosine-phospho-ribonucleoside in mRNA + beta-nicotinamide D-ribonucleotide + 2 H(+). The catalysed reaction is NAD(+) + H2O = beta-nicotinamide D-ribonucleotide + AMP + 2 H(+). It catalyses the reaction NADH + H2O = reduced beta-nicotinamide D-ribonucleotide + AMP + 2 H(+). MRNA decapping enzyme that specifically removes the nicotinamide adenine dinucleotide (NAD) cap from a subset of mRNAs by hydrolyzing the diphosphate linkage to produce nicotinamide mononucleotide (NMN) and 5' monophosphate mRNA. The NAD-cap is present at the 5'-end of some mRNAs and stabilizes RNA against 5'-processing. Has preference for mRNAs with a 5'-end purine. Catalyzes the hydrolysis of a broad range of dinucleotide pyrophosphates. The polypeptide is NAD-capped RNA hydrolase NudC (Escherichia fergusonii (strain ATCC 35469 / DSM 13698 / CCUG 18766 / IAM 14443 / JCM 21226 / LMG 7866 / NBRC 102419 / NCTC 12128 / CDC 0568-73)).